The primary structure comprises 60 residues: UPF0434 protein HCH_02705 (60 aa).

This sequence belongs to the UPF0434 family.

This is UPF0434 protein HCH_02705 from Hahella chejuensis (strain KCTC 2396).